The chain runs to 292 residues: Acetylglutamate kinase (292 aa).

Substrate is bound by residues 64–65 (GG), R86, and N190.

It belongs to the acetylglutamate kinase family. ArgB subfamily.

It localises to the cytoplasm. The enzyme catalyses N-acetyl-L-glutamate + ATP = N-acetyl-L-glutamyl 5-phosphate + ADP. It functions in the pathway amino-acid biosynthesis; L-arginine biosynthesis; N(2)-acetyl-L-ornithine from L-glutamate: step 2/4. Its function is as follows. Catalyzes the ATP-dependent phosphorylation of N-acetyl-L-glutamate. The chain is Acetylglutamate kinase from Trichlorobacter lovleyi (strain ATCC BAA-1151 / DSM 17278 / SZ) (Geobacter lovleyi).